Consider the following 361-residue polypeptide: Chorismate synthase (361 aa).

2 residues coordinate NADP(+): arginine 48 and arginine 54. FMN contacts are provided by residues 131–133, 243–244, glycine 287, 302–306, and arginine 328; these read RSS, NA, and KPTSS.

This sequence belongs to the chorismate synthase family. Homotetramer. It depends on FMNH2 as a cofactor.

It catalyses the reaction 5-O-(1-carboxyvinyl)-3-phosphoshikimate = chorismate + phosphate. Its pathway is metabolic intermediate biosynthesis; chorismate biosynthesis; chorismate from D-erythrose 4-phosphate and phosphoenolpyruvate: step 7/7. Functionally, catalyzes the anti-1,4-elimination of the C-3 phosphate and the C-6 proR hydrogen from 5-enolpyruvylshikimate-3-phosphate (EPSP) to yield chorismate, which is the branch point compound that serves as the starting substrate for the three terminal pathways of aromatic amino acid biosynthesis. This reaction introduces a second double bond into the aromatic ring system. This chain is Chorismate synthase, found in Rhodopseudomonas palustris (strain BisA53).